The sequence spans 387 residues: 3-ketoacyl-CoA thiolase (387 aa).

C91 serves as the catalytic Acyl-thioester intermediate. Residues H343 and C373 each act as proton acceptor in the active site.

The protein belongs to the thiolase-like superfamily. Thiolase family. As to quaternary structure, heterotetramer of two alpha chains (FadB) and two beta chains (FadA).

It localises to the cytoplasm. The catalysed reaction is an acyl-CoA + acetyl-CoA = a 3-oxoacyl-CoA + CoA. It functions in the pathway lipid metabolism; fatty acid beta-oxidation. In terms of biological role, catalyzes the final step of fatty acid oxidation in which acetyl-CoA is released and the CoA ester of a fatty acid two carbons shorter is formed. This is 3-ketoacyl-CoA thiolase from Escherichia coli O1:K1 / APEC.